We begin with the raw amino-acid sequence, 24 residues long: Lycosin-I (24 aa).

The protein belongs to the cationic peptide 04 (cupiennin) family. 05 subfamily. In terms of assembly, monomer in solution. Small size oligomers on the lipid membranes.

It is found in the secreted. The protein resides in the target cell membrane. Functionally, antimicrobial peptide that inhibits many reference strains of bacteria and fungi. Is potent against Candida species and multidrug-resistant Acinetobacter baumannii (MDRAB). Is probably localized in the cytoplasm after being transported through the cell wall and membrane. Is able to interact with cell membranes and enter into cell plasma to activate the mitochondrial death pathway to sensitize cancer cells for apoptosis, as well as up-regulates p27 to inhibit cell proliferation. It shows very low effect on normal cells, such as erythrocytes, Hek293t cells. It also potently inhibits tumor cell growth in vitro, and suppresses various tumor growth in vivo when tested in human cancer xenograft models. It interacts with the cell membrane and is then internalized into the cytoplasm of cancer cells to initiate the programmable cell death. In addition, this peptide has the therapeutic effects of anti-hypertension by endothelium-dependent vasodilatation via the NO/sGC/cGMP signaling pathway. In vivo, this peptide also shows a significant ability to inhibit T.gondii invasion and proliferation, making it a potential alternative agent for the treatment of toxoplasmosis. The protein is Lycosin-I of Lycosa singoriensis (Wolf spider).